The following is a 774-amino-acid chain: 5-methyltetrahydropteroyltriglutamate--homocysteine methyltransferase (774 aa).

Residues 15–18 and K116 each bind 5-methyltetrahydropteroyltri-L-glutamate; that span reads RELK. Residues 445-447 and E498 contribute to the L-homocysteine site; that span reads IGS. L-methionine-binding positions include 445-447 and E498; that span reads IGS. Residues 529 to 530 and W575 each bind 5-methyltetrahydropteroyltri-L-glutamate; that span reads RC. Residue D613 coordinates L-homocysteine. Residue D613 coordinates L-methionine. Residue E619 coordinates 5-methyltetrahydropteroyltri-L-glutamate. H655, C657, and E679 together coordinate Zn(2+). Residue H708 is the Proton donor of the active site. Zn(2+) is bound at residue C740.

This sequence belongs to the vitamin-B12 independent methionine synthase family. The cofactor is Zn(2+).

The enzyme catalyses 5-methyltetrahydropteroyltri-L-glutamate + L-homocysteine = tetrahydropteroyltri-L-glutamate + L-methionine. It participates in amino-acid biosynthesis; L-methionine biosynthesis via de novo pathway; L-methionine from L-homocysteine (MetE route): step 1/1. Its function is as follows. Catalyzes the transfer of a methyl group from 5-methyltetrahydrofolate to homocysteine resulting in methionine formation. The sequence is that of 5-methyltetrahydropteroyltriglutamate--homocysteine methyltransferase from Flavobacterium johnsoniae (strain ATCC 17061 / DSM 2064 / JCM 8514 / BCRC 14874 / CCUG 350202 / NBRC 14942 / NCIMB 11054 / UW101) (Cytophaga johnsonae).